Here is a 279-residue protein sequence, read N- to C-terminus: Acetylglutamate kinase (279 aa).

Substrate is bound by residues 64–65 (GG), R86, and N177.

Belongs to the acetylglutamate kinase family. ArgB subfamily.

The protein resides in the cytoplasm. The catalysed reaction is N-acetyl-L-glutamate + ATP = N-acetyl-L-glutamyl 5-phosphate + ADP. Its pathway is amino-acid biosynthesis; L-arginine biosynthesis; N(2)-acetyl-L-ornithine from L-glutamate: step 2/4. Catalyzes the ATP-dependent phosphorylation of N-acetyl-L-glutamate. In Campylobacter jejuni subsp. jejuni serotype O:2 (strain ATCC 700819 / NCTC 11168), this protein is Acetylglutamate kinase.